The sequence spans 367 residues: UDP-N-acetylglucosamine--N-acetylmuramyl-(pentapeptide) pyrophosphoryl-undecaprenol N-acetylglucosamine transferase (367 aa).

UDP-N-acetyl-alpha-D-glucosamine contacts are provided by residues 15 to 17 (TGG), asparagine 127, arginine 163, serine 191, isoleucine 249, and glutamine 294.

It belongs to the glycosyltransferase 28 family. MurG subfamily.

The protein localises to the cell inner membrane. The catalysed reaction is di-trans,octa-cis-undecaprenyl diphospho-N-acetyl-alpha-D-muramoyl-L-alanyl-D-glutamyl-meso-2,6-diaminopimeloyl-D-alanyl-D-alanine + UDP-N-acetyl-alpha-D-glucosamine = di-trans,octa-cis-undecaprenyl diphospho-[N-acetyl-alpha-D-glucosaminyl-(1-&gt;4)]-N-acetyl-alpha-D-muramoyl-L-alanyl-D-glutamyl-meso-2,6-diaminopimeloyl-D-alanyl-D-alanine + UDP + H(+). It functions in the pathway cell wall biogenesis; peptidoglycan biosynthesis. Functionally, cell wall formation. Catalyzes the transfer of a GlcNAc subunit on undecaprenyl-pyrophosphoryl-MurNAc-pentapeptide (lipid intermediate I) to form undecaprenyl-pyrophosphoryl-MurNAc-(pentapeptide)GlcNAc (lipid intermediate II). In Burkholderia multivorans (strain ATCC 17616 / 249), this protein is UDP-N-acetylglucosamine--N-acetylmuramyl-(pentapeptide) pyrophosphoryl-undecaprenol N-acetylglucosamine transferase.